Reading from the N-terminus, the 258-residue chain is 5'-nucleotidase SurE (258 aa).

A divalent metal cation is bound by residues aspartate 8, aspartate 9, serine 40, and asparagine 92.

This sequence belongs to the SurE nucleotidase family. Requires a divalent metal cation as cofactor.

Its subcellular location is the cytoplasm. The catalysed reaction is a ribonucleoside 5'-phosphate + H2O = a ribonucleoside + phosphate. Nucleotidase that shows phosphatase activity on nucleoside 5'-monophosphates. This chain is 5'-nucleotidase SurE, found in Brucella anthropi (strain ATCC 49188 / DSM 6882 / CCUG 24695 / JCM 21032 / LMG 3331 / NBRC 15819 / NCTC 12168 / Alc 37) (Ochrobactrum anthropi).